A 220-amino-acid chain; its full sequence is Small ribosomal subunit protein uS3 (220 aa).

One can recognise a KH type-2 domain in the interval Ile-38–Arg-106.

This sequence belongs to the universal ribosomal protein uS3 family. In terms of assembly, part of the 30S ribosomal subunit. Forms a tight complex with proteins S10 and S14.

Binds the lower part of the 30S subunit head. Binds mRNA in the 70S ribosome, positioning it for translation. This chain is Small ribosomal subunit protein uS3, found in Myxococcus xanthus (strain DK1622).